The primary structure comprises 153 residues: 3-hydroxyacyl-[acyl-carrier-protein] dehydratase FabZ (153 aa).

His-57 is a catalytic residue.

Belongs to the thioester dehydratase family. FabZ subfamily.

The protein resides in the cytoplasm. It catalyses the reaction a (3R)-hydroxyacyl-[ACP] = a (2E)-enoyl-[ACP] + H2O. Involved in unsaturated fatty acids biosynthesis. Catalyzes the dehydration of short chain beta-hydroxyacyl-ACPs and long chain saturated and unsaturated beta-hydroxyacyl-ACPs. The protein is 3-hydroxyacyl-[acyl-carrier-protein] dehydratase FabZ of Aeromonas hydrophila subsp. hydrophila (strain ATCC 7966 / DSM 30187 / BCRC 13018 / CCUG 14551 / JCM 1027 / KCTC 2358 / NCIMB 9240 / NCTC 8049).